We begin with the raw amino-acid sequence, 195 residues long: Killer cell lectin-like receptor subfamily G member 1 (195 aa).

Residues 1 to 38 (MTDSVIYSMLELPTATQAQNDYGPQQKSSSSRPSCSCL) are Cytoplasmic-facing. Positions 5-10 (VIYSML) match the ITIM motif motif. The helical; Signal-anchor for type II membrane protein transmembrane segment at 39-59 (VAIALGLLTAVLLSVLLYQWI) threads the bilayer. Over 60-195 (LCQGSNYSTC…KCPFADQALF (136 aa)) the chain is Extracellular. The N-linked (GlcNAc...) asparagine glycan is linked to Asn-65. A disulfide bridge links Cys-75 with Cys-86. The C-type lectin domain occupies 82–185 (YGNHCYYFSV…CEVPLHWVCK (104 aa)). Residues Asn-97, Asn-137, and Asn-150 are each glycosylated (N-linked (GlcNAc...) asparagine). Intrachain disulfides connect Cys-103-Cys-184 and Cys-163-Cys-176.

As to quaternary structure, forms a monomer and homodimer; disulfide-linked. Interacts (via ITIM motif) with PTPN11 and INPP5D. As to expression, expressed specifically on natural killer (NK) cells and T-cells, mainly CD8 T-cells.

It is found in the cell membrane. Functionally, plays an inhibitory role on natural killer (NK) cells and T-cell functions upon binding to their non-MHC ligands. May mediate missing self recognition by binding to a highly conserved site on classical cadherins, enabling it to monitor expression of E-cadherin/CDH1, N-cadherin/CDH2 and R-cadherin/CDH4 on target cells. This chain is Killer cell lectin-like receptor subfamily G member 1 (KLRG1), found in Homo sapiens (Human).